The following is a 66-amino-acid chain: Large ribosomal subunit protein bL35 (66 aa).

Positions 1–15 (MSKMKTKSGAKKRFK) are enriched in basic residues. The disordered stretch occupies residues 1-35 (MSKMKTKSGAKKRFKLTASGKVKAGQAGKRHGMIK).

This sequence belongs to the bacterial ribosomal protein bL35 family.

This Maricaulis maris (strain MCS10) (Caulobacter maris) protein is Large ribosomal subunit protein bL35.